The chain runs to 316 residues: Methionyl-tRNA formyltransferase (316 aa).

(6S)-5,6,7,8-tetrahydrofolate is bound at residue 112-115 (SLLP).

Belongs to the Fmt family.

It catalyses the reaction L-methionyl-tRNA(fMet) + (6R)-10-formyltetrahydrofolate = N-formyl-L-methionyl-tRNA(fMet) + (6S)-5,6,7,8-tetrahydrofolate + H(+). In terms of biological role, attaches a formyl group to the free amino group of methionyl-tRNA(fMet). The formyl group appears to play a dual role in the initiator identity of N-formylmethionyl-tRNA by promoting its recognition by IF2 and preventing the misappropriation of this tRNA by the elongation apparatus. The polypeptide is Methionyl-tRNA formyltransferase (Actinobacillus pleuropneumoniae serotype 5b (strain L20)).